A 422-amino-acid polypeptide reads, in one-letter code: UPF0597 protein Kole_0595 (422 aa).

The protein belongs to the UPF0597 family.

This chain is UPF0597 protein Kole_0595, found in Kosmotoga olearia (strain ATCC BAA-1733 / DSM 21960 / TBF 19.5.1).